The primary structure comprises 366 residues: Phospho-N-acetylmuramoyl-pentapeptide-transferase (366 aa).

A run of 10 helical transmembrane segments spans residues alanine 27 to leucine 47, threonine 71 to alanine 91, leucine 93 to phenylalanine 113, phenylalanine 138 to alanine 158, leucine 174 to glycine 194, glycine 205 to alanine 225, leucine 245 to proline 265, alanine 268 to valine 288, valine 297 to phenylalanine 317, and glutamine 343 to leucine 363.

It belongs to the glycosyltransferase 4 family. MraY subfamily. Mg(2+) serves as cofactor.

The protein resides in the cell inner membrane. The enzyme catalyses UDP-N-acetyl-alpha-D-muramoyl-L-alanyl-gamma-D-glutamyl-meso-2,6-diaminopimeloyl-D-alanyl-D-alanine + di-trans,octa-cis-undecaprenyl phosphate = di-trans,octa-cis-undecaprenyl diphospho-N-acetyl-alpha-D-muramoyl-L-alanyl-D-glutamyl-meso-2,6-diaminopimeloyl-D-alanyl-D-alanine + UMP. It participates in cell wall biogenesis; peptidoglycan biosynthesis. Its function is as follows. Catalyzes the initial step of the lipid cycle reactions in the biosynthesis of the cell wall peptidoglycan: transfers peptidoglycan precursor phospho-MurNAc-pentapeptide from UDP-MurNAc-pentapeptide onto the lipid carrier undecaprenyl phosphate, yielding undecaprenyl-pyrophosphoryl-MurNAc-pentapeptide, known as lipid I. This chain is Phospho-N-acetylmuramoyl-pentapeptide-transferase, found in Sinorhizobium medicae (strain WSM419) (Ensifer medicae).